A 392-amino-acid polypeptide reads, in one-letter code: Sugar efflux transporter A (392 aa).

The Cytoplasmic segment spans residues 1–10 (MIWIMTMARR). The chain crosses the membrane as a helical span at residues 11 to 31 (MNGVYAAFMLVAFMMGVAGAL). The Periplasmic segment spans residues 32–48 (QAPTLSLFLSREVGAQP). The helical transmembrane segment at 49-69 (FWIGLFYTVNAIAGIGVSLWL) threads the bilayer. Topologically, residues 70-81 (AKRSDSQGDRRK) are cytoplasmic. Residues 82 to 102 (LIIFCCLMAIGNALLFAFNRH) traverse the membrane as a helical segment. Topologically, residues 103–106 (YLTL) are periplasmic. A helical membrane pass occupies residues 107–127 (ITCGVLLASLANTAMPQLFAL). Topologically, residues 128-149 (AREYADNSAREVVMFSSVMRAQ) are cytoplasmic. The chain crosses the membrane as a helical span at residues 150 to 170 (LSLAWVIGPPLAFMLALNYGF). A topological domain (periplasmic) is located at residue threonine 171. Residues 172 to 192 (VMFSIAAGIFTLSLVLIAFML) traverse the membrane as a helical segment. At 193-219 (PSVARVELPSENALSMQGGWQDSNVRM) the chain is on the cytoplasmic side. A helical transmembrane segment spans residues 220–240 (LFVASTLMWTCNTMYIIDMPL). The Periplasmic segment spans residues 241–251 (WISSELGLPDK). A helical membrane pass occupies residues 252 to 272 (LAGFLMGTAAGLEIPAMILAG). Topologically, residues 273–282 (YYVKRYGKRR) are cytoplasmic. A helical membrane pass occupies residues 283 to 303 (MMVIAVAAGVLFYTGLIFFNS). Residues 304–308 (RMALM) lie on the Periplasmic side of the membrane. Residues 309-329 (TLQLFNAVFIGIVAGIGMLWF) traverse the membrane as a helical segment. The Cytoplasmic portion of the chain corresponds to 330–342 (QDLMPGRAGAATT). The chain crosses the membrane as a helical span at residues 343-363 (LFTNSISTGVILAGVIQGAIA). Residues 364–365 (QS) are Periplasmic-facing. A helical membrane pass occupies residues 366 to 386 (WGHFAVYWVIAVISVVALFLT). Over 387–392 (AKVKDV) the chain is Cytoplasmic.

This sequence belongs to the major facilitator superfamily. Set transporter family.

It is found in the cell inner membrane. In terms of biological role, involved in the efflux of sugars. The physiological role may be the detoxification of non-metabolizable sugar analogs. Can transport IPTG, lactose and glucose. Has broad substrate specificity, with preferences for glucosides or galactosides with alkyl or aryl substituents. This chain is Sugar efflux transporter A (setA), found in Escherichia coli (strain K12).